A 412-amino-acid chain; its full sequence is Multidrug resistance protein MdtA (412 aa).

Positions Met1 to Ala21 are cleaved as a signal peptide. 2 disordered regions span residues Gly33–Arg53 and Val389–Ser412.

The protein belongs to the membrane fusion protein (MFP) (TC 8.A.1) family. In terms of assembly, part of a tripartite efflux system composed of MdtA, MdtB and MdtC.

It localises to the cell inner membrane. The chain is Multidrug resistance protein MdtA from Klebsiella pneumoniae subsp. pneumoniae (strain ATCC 700721 / MGH 78578).